Consider the following 43-residue polypeptide: Protein PsbN (43 aa).

A helical membrane pass occupies residues 4-24 (AIVLIISVGAALVAVTGYGIY).

Belongs to the PsbN family.

It localises to the cellular thylakoid membrane. Functionally, may play a role in photosystem I and II biogenesis. The polypeptide is Protein PsbN (Trichormus variabilis (strain ATCC 29413 / PCC 7937) (Anabaena variabilis)).